The primary structure comprises 236 residues: Phosphoribosylaminoimidazole-succinocarboxamide synthase (236 aa).

The protein belongs to the SAICAR synthetase family.

The catalysed reaction is 5-amino-1-(5-phospho-D-ribosyl)imidazole-4-carboxylate + L-aspartate + ATP = (2S)-2-[5-amino-1-(5-phospho-beta-D-ribosyl)imidazole-4-carboxamido]succinate + ADP + phosphate + 2 H(+). Its pathway is purine metabolism; IMP biosynthesis via de novo pathway; 5-amino-1-(5-phospho-D-ribosyl)imidazole-4-carboxamide from 5-amino-1-(5-phospho-D-ribosyl)imidazole-4-carboxylate: step 1/2. The sequence is that of Phosphoribosylaminoimidazole-succinocarboxamide synthase from Pseudomonas savastanoi pv. phaseolicola (strain 1448A / Race 6) (Pseudomonas syringae pv. phaseolicola (strain 1448A / Race 6)).